Here is an 839-residue protein sequence, read N- to C-terminus: Autophagy-related protein 9A (839 aa).

The interval M1–G21 is disordered. A2 bears the N-acetylalanine mark. The Cytoplasmic segment spans residues A2–C61. A Tyrosine-based sorting signal motif is present at residues Y8 to L11. 3 positions are modified to phosphoserine: S14, S16, and S18. Residues M62–V84 form a helical membrane-spanning segment. Residues S85–E128 lie on the Lumenal side of the membrane. N-linked (GlcNAc...) asparagine glycosylation occurs at N99. Residues N129–I154 form a helical membrane-spanning segment. Over C155 to I290 the chain is Cytoplasmic. An intramembrane segment occupies L291–C301. Residues P302–V319 are Cytoplasmic-facing. Residues L320–G328 lie within the membrane without spanning it. Topologically, residues A329–P371 are cytoplasmic. The helical transmembrane segment at L372–Y397 threads the bilayer. The Lumenal portion of the chain corresponds to D398–H406. The chain crosses the membrane as a helical span at residues V407 to F424. The Cytoplasmic segment spans residues I425–Q470. The stretch at Y471–L480 is an intramembrane region. Topologically, residues L481 to P483 are cytoplasmic. Residues I484–F492 lie within the membrane without spanning it. Residues C493 to V839 lie on the Cytoplasmic side of the membrane. A phosphoserine mark is found at S656, S735, S738, S741, and S828. Disordered regions lie at residues S656–V688 and Q719–V839. Positions E724–D736 are enriched in basic and acidic residues. Acidic residues-rich tracts occupy residues E737–G747 and V823–L832.

Belongs to the ATG9 family. In terms of assembly, homotrimer; forms a homotrimer with a central pore that forms a path between the two membrane leaflets. Interacts (via cytoplasmic its C-terminus) with ATG2A. Interacts with SUPT20H. Interacts (via the tyrosine-based sorting signal motif) with AP4M1; promoting association with the AP-4 complex. Interacts with ARFIP1 and ARFIP2. Interacts with PI4K2A and PI4KB. Interacts with ATG4A; the interaction is direct and promotes ATG9A trafficking. Post-translationally, ufmylated in a DDRGK1 dependent manner.

The protein resides in the preautophagosomal structure membrane. It localises to the cytoplasmic vesicle. Its subcellular location is the autophagosome membrane. The protein localises to the golgi apparatus. It is found in the trans-Golgi network membrane. The protein resides in the late endosome membrane. It localises to the recycling endosome membrane. Its subcellular location is the endoplasmic reticulum membrane. The protein localises to the mitochondrion membrane. The catalysed reaction is a 1,2-diacyl-sn-glycero-3-phosphocholine(in) = a 1,2-diacyl-sn-glycero-3-phosphocholine(out). It carries out the reaction a 1,2-diacyl-sn-glycero-3-phospho-L-serine(in) = a 1,2-diacyl-sn-glycero-3-phospho-L-serine(out). The enzyme catalyses a 1,2-diacyl-sn-glycero-3-phosphoethanolamine(in) = a 1,2-diacyl-sn-glycero-3-phosphoethanolamine(out). Its function is as follows. Phospholipid scramblase involved in autophagy by mediating autophagosomal membrane expansion. Cycles between the preautophagosomal structure/phagophore assembly site (PAS) and the cytoplasmic vesicle pool and supplies membrane for the growing autophagosome. Lipid scramblase activity plays a key role in preautophagosomal structure/phagophore assembly by distributing the phospholipids that arrive through ATG2 (ATG2A or ATG2B) from the cytoplasmic to the luminal leaflet of the bilayer, thereby driving autophagosomal membrane expansion. Also required to supply phosphatidylinositol 4-phosphate to the autophagosome initiation site by recruiting the phosphatidylinositol 4-kinase beta (PI4KB) in a process dependent on ARFIP2, but not ARFIP1. In addition to autophagy, also plays a role in necrotic cell death. In Bos taurus (Bovine), this protein is Autophagy-related protein 9A.